Consider the following 398-residue polypeptide: Large ribosomal subunit protein uL3 (398 aa).

The segment covering 1–10 (MSHRKFEAPR) has biased composition (basic and acidic residues). Residues 1 to 34 (MSHRKFEAPRHGNLGFRPRKRAARHQGKVKSFPK) form a disordered region. Residues 17–28 (RPRKRAARHQGK) are compositionally biased toward basic residues.

This sequence belongs to the universal ribosomal protein uL3 family.

It is found in the cytoplasm. Functionally, the L3 protein is a component of the large subunit of cytoplasmic ribosomes. In Dictyostelium discoideum (Social amoeba), this protein is Large ribosomal subunit protein uL3 (rpl3).